The chain runs to 528 residues: Protein MGF 505-7R (528 aa).

Belongs to the asfivirus MGF 505 family. Interacts with host STING1. Interacts with host JAK1; this interaction leads to JAK1 degradation. Interacts with host JAK2; this interaction leads to JAK2 degradation. Interacts with host RELA; this interaction inhibits NF-kappa-B promoter activity.

The protein localises to the host cytoplasm. In terms of biological role, plays a role in virus cell tropism, and may be required for efficient virus replication in macrophages. Interferes with host NF-kappa-B promoter activity mediated by TLR8. Mechanistically, inhibits the phosphorylation and subsequent nuclear translocation of host NF-kappa-B RELA subunit downstream of TLR8. Promotes the expression of the autophagy-related protein host ULK1 to degrade host STING and inhibit the interferon response. Also inhibits JAK1- and JAK2-mediated signaling and thus negatively regulates the IFN-gamma signaling. The protein is Protein MGF 505-7R of African swine fever virus (isolate Pig/Kenya/KEN-50/1950) (ASFV).